Reading from the N-terminus, the 442-residue chain is Prenyltransferase nscD (442 aa).

Belongs to the tryptophan dimethylallyltransferase family.

Its pathway is secondary metabolite biosynthesis. In terms of biological role, prenyltransferase; part of the gene cluster that mediates the biosynthesis of neosartoricin B, a prenylated anthracenone that probably exhibits T-cell antiproliferative activity, suggestive of a physiological role as an immunosuppressive agent. The non-reducing polyketide synthase nscA probably synthesizes and cyclizes the decaketide backbone. The hydrolase nscB then mediates the product release through hydrolysis followed by spontaneous decarboxylation. The prenyltransferase nscD catalyzes the addition of the dimethylallyl group to the aromatic C5. The FAD-dependent monooxygenase nscC is then responsible for the stereospecific hydroxylation at C2. Neosartoricin B can be converted into two additional compounds neosartoricins C and D. Neosartoricin C is a spirocyclic compound that is cyclized through the attack of C3 hydroxyl on C14, followed by dehydration. On the other hand, neosartoricin D is a further cyclized compound in which attack of C2 on C14 in neosartoricin C results in the formation of the acetal-containing dioxabicyclo-octanone ring. Both of these compounds are novel and possibly represent related metabolites of the gene cluster. The protein is Prenyltransferase nscD of Trichophyton verrucosum (strain HKI 0517).